Reading from the N-terminus, the 310-residue chain is Porphobilinogen deaminase (310 aa).

The residue at position 236 (cysteine 236) is an S-(dipyrrolylmethanemethyl)cysteine.

The protein belongs to the HMBS family. In terms of assembly, monomer. Dipyrromethane is required as a cofactor.

The enzyme catalyses 4 porphobilinogen + H2O = hydroxymethylbilane + 4 NH4(+). Its pathway is porphyrin-containing compound metabolism; protoporphyrin-IX biosynthesis; coproporphyrinogen-III from 5-aminolevulinate: step 2/4. In terms of biological role, tetrapolymerization of the monopyrrole PBG into the hydroxymethylbilane pre-uroporphyrinogen in several discrete steps. This chain is Porphobilinogen deaminase, found in Nitratiruptor sp. (strain SB155-2).